The chain runs to 214 residues: Methylthioribulose-1-phosphate dehydratase (214 aa).

Zn(2+) is bound by residues H103 and H105.

This sequence belongs to the aldolase class II family. MtnB subfamily. It depends on Zn(2+) as a cofactor.

The enzyme catalyses 5-(methylsulfanyl)-D-ribulose 1-phosphate = 5-methylsulfanyl-2,3-dioxopentyl phosphate + H2O. It functions in the pathway amino-acid biosynthesis; L-methionine biosynthesis via salvage pathway; L-methionine from S-methyl-5-thio-alpha-D-ribose 1-phosphate: step 2/6. Functionally, catalyzes the dehydration of methylthioribulose-1-phosphate (MTRu-1-P) into 2,3-diketo-5-methylthiopentyl-1-phosphate (DK-MTP-1-P). This Granulibacter bethesdensis (strain ATCC BAA-1260 / CGDNIH1) protein is Methylthioribulose-1-phosphate dehydratase.